Reading from the N-terminus, the 363-residue chain is Flagellar P-ring protein (363 aa).

A signal peptide spans 1–20 (MKLKLILAVAMLAFSLPSQA).

Belongs to the FlgI family. As to quaternary structure, the basal body constitutes a major portion of the flagellar organelle and consists of four rings (L,P,S, and M) mounted on a central rod.

It localises to the periplasm. It is found in the bacterial flagellum basal body. Functionally, assembles around the rod to form the L-ring and probably protects the motor/basal body from shearing forces during rotation. This Shewanella sp. (strain MR-4) protein is Flagellar P-ring protein.